The sequence spans 954 residues: MANSCRKLIFNIYVVFYCSAVIMPQICICSQFTSSPIDQFNKDPKAFPVATNGEIFPWHELRLPTVVIPLHYDLLIHPNLTSLDFVASEKIEVLVRDATQFIILHSKDLEILNASLQSEEDVRYKKPGENLTVLSYPAHQQIALLVPEKLRAHLRYSVAIDFQAKLADGFEGFYKSTYRTLGGETRTIAVTDFEPTEARMAFPCFDEPLFKANFSIKIRRESRHIALSNMPKVKTIELEGGLLEDHFETTVRMSTYLVAYIVCDFTSVSGTASSGVKVSIYASPDKWSQTHYALEASVKLLDFYENYFDIHYPLPKLDLVAIPDFASGAMENWGLITYRETSLLFDPKTSSTSDKLWVTKVIAHELAHQWFGNLVTMEWWNDIWLNEGFARYMELISLNITYPELQFDDSFSNTCFEVIKRDSLNSSHPISNEAKTATQIKEMFDAVSYNKGACILNMLKDFLSEETFRKGIIHYLKKFTYRNAKNDDLWHSLSNNCLEGDSTSGGFCYSDSRKTSNTLAFLRENVELKEMMATWTLQKGIPLVVVKREGRSLRLQQERFLSGVFKEDPEWGTLQERYLWHIPVTYSTSSSQAIHRHILKLKTDTVDLSEKTDWVKFNVDSSGYYIVHYEGQGWDELITLLNQNHTLLRPKDRLGLIHDAFQLVSAGRLTLDKALDLTRYLQHETSIPALLKGLEYLELFYRMVERRNISDVTENLKHYLLQYFKPVIDTQSWLDEGSVWDRMLRSTVLKLACYLNHAPCIQKATELFSQWMESSGKLNIPADVLTIVYSVGAQTTAGWNYLLEQYELSLSGAEKNKILYALSTSKHQEKLMKLIELGMEGKVIKTQDLATLLFTTARNPKGQQLAWNFVKENWTHLLKKFELGSFPIRMIISGTTSHFSSKDELQEVKLFFESLKAQGSHLDIFQIILETISKNIKWLEKNLPTLRKWLLTSI.

The Cytoplasmic portion of the chain corresponds to 1–7; that stretch reads MANSCRK. Residues 8-28 form a helical; Signal-anchor for type II membrane protein membrane-spanning segment; the sequence is LIFNIYVVFYCSAVIMPQICI. The Lumenal portion of the chain corresponds to 29-954; that stretch reads CSQFTSSPID…TLRKWLLTSI (926 aa). N-linked (GlcNAc...) asparagine glycans are attached at residues asparagine 79 and asparagine 113. Residues glutamate 194 and 328-332 each bind substrate; that span reads GAMEN. Histidine 364 is a binding site for Zn(2+). Catalysis depends on glutamate 365, which acts as the Proton acceptor. The Zn(2+) site is built by histidine 368 and glutamate 387. N-linked (GlcNAc...) asparagine glycosylation occurs at asparagine 399. Cysteine 415 and cysteine 454 are oxidised to a cystine. Asparagine 644 is a glycosylation site (N-linked (GlcNAc...) asparagine). A disulfide bridge connects residues cysteine 753 and cysteine 760.

The protein belongs to the peptidase M1 family. Heterodimer with ERAP1. The cofactor is Zn(2+). N-glycosylated.

The protein resides in the endoplasmic reticulum membrane. Aminopeptidase that plays a central role in peptide trimming, a step required for the generation of most HLA class I-binding peptides. Peptide trimming is essential to customize longer precursor peptides to fit them to the correct length required for presentation on MHC class I molecules. Preferentially hydrolyzes the basic residues Arg and Lys. The sequence is that of Endoplasmic reticulum aminopeptidase 2 (ERAP2) from Bos taurus (Bovine).